A 225-amino-acid chain; its full sequence is Uridylate kinase (225 aa).

9–10 (GS) contributes to the ATP binding site. Gly-44 contacts UMP. Gly-45 and Arg-49 together coordinate ATP. Residues Asp-66 and 114–120 (THPGHTT) contribute to the UMP site. Thr-140, Asn-141, Tyr-146, and Asp-149 together coordinate ATP.

This sequence belongs to the UMP kinase family. In terms of assembly, homohexamer.

Its subcellular location is the cytoplasm. It catalyses the reaction UMP + ATP = UDP + ADP. It functions in the pathway pyrimidine metabolism; CTP biosynthesis via de novo pathway; UDP from UMP (UMPK route): step 1/1. Inhibited by UTP. Its function is as follows. Catalyzes the reversible phosphorylation of UMP to UDP. This is Uridylate kinase from Thermococcus sibiricus (strain DSM 12597 / MM 739).